The chain runs to 301 residues: Mycothiol acetyltransferase (301 aa).

N-acetyltransferase domains follow at residues 6 to 151 (EWRQ…ILRD) and 153 to 301 (VSLR…QYGR). 79–81 (LFV) is a binding site for acetyl-CoA. 1D-myo-inositol 2-(L-cysteinylamino)-2-deoxy-alpha-D-glucopyranoside contacts are provided by glutamate 180, lysine 219, and glutamate 235. Acetyl-CoA-binding positions include 239–241 (VGV) and 246–252 (QGGGLGR). Tyrosine 273 provides a ligand contact to 1D-myo-inositol 2-(L-cysteinylamino)-2-deoxy-alpha-D-glucopyranoside.

This sequence belongs to the acetyltransferase family. MshD subfamily. In terms of assembly, monomer.

It catalyses the reaction 1D-myo-inositol 2-(L-cysteinylamino)-2-deoxy-alpha-D-glucopyranoside + acetyl-CoA = mycothiol + CoA + H(+). Catalyzes the transfer of acetyl from acetyl-CoA to desacetylmycothiol (Cys-GlcN-Ins) to form mycothiol. This Amycolatopsis mediterranei (strain U-32) protein is Mycothiol acetyltransferase.